The primary structure comprises 92 residues: Small ribosomal subunit protein uS19c (92 aa).

Belongs to the universal ribosomal protein uS19 family.

It localises to the plastid. Protein S19 forms a complex with S13 that binds strongly to the 16S ribosomal RNA. The polypeptide is Small ribosomal subunit protein uS19c (Cuscuta reflexa (Southern Asian dodder)).